A 449-amino-acid polypeptide reads, in one-letter code: DNA-directed RNA polymerase subunit Rpo1C (449 aa).

The unknown stretch occupies residues 1 to 68; the sequence is MQDVIKKIED…EGEELLKAVE (68 aa). The interval 69–449 is DNA-directed RNA polymerase subunit Rpo1C; it reads DEYLRILKVR…TGSVSVIMKK (381 aa).

Belongs to the RNA polymerase beta' chain family. In terms of assembly, part of the RNA polymerase complex.

It is found in the cytoplasm. The catalysed reaction is RNA(n) + a ribonucleoside 5'-triphosphate = RNA(n+1) + diphosphate. Functionally, DNA-dependent RNA polymerase (RNAP) catalyzes the transcription of DNA into RNA using the four ribonucleoside triphosphates as substrates. Forms part of the jaw domain. The sequence is that of DNA-directed RNA polymerase subunit Rpo1C from Methanothermobacter thermautotrophicus (strain Winter) (Methanobacterium thermoautotrophicum).